The chain runs to 309 residues: ATP synthase gamma chain (309 aa).

This sequence belongs to the ATPase gamma chain family. As to quaternary structure, F-type ATPases have 2 components, CF(1) - the catalytic core - and CF(0) - the membrane proton channel. CF(1) has five subunits: alpha(3), beta(3), gamma(1), delta(1), epsilon(1). CF(0) has three main subunits: a, b and c.

It localises to the cell membrane. Functionally, produces ATP from ADP in the presence of a proton gradient across the membrane. The gamma chain is believed to be important in regulating ATPase activity and the flow of protons through the CF(0) complex. The protein is ATP synthase gamma chain of Salinispora arenicola (strain CNS-205).